We begin with the raw amino-acid sequence, 856 residues long: DNA mismatch repair protein MutS (856 aa).

607 to 614 (GPNMAGKS) is a binding site for ATP.

Belongs to the DNA mismatch repair MutS family.

This protein is involved in the repair of mismatches in DNA. It is possible that it carries out the mismatch recognition step. This protein has a weak ATPase activity. The sequence is that of DNA mismatch repair protein MutS from Cytophaga hutchinsonii (strain ATCC 33406 / DSM 1761 / CIP 103989 / NBRC 15051 / NCIMB 9469 / D465).